Here is a 218-residue protein sequence, read N- to C-terminus: N-(5'-phosphoribosyl)anthranilate isomerase (218 aa).

It belongs to the TrpF family.

It carries out the reaction N-(5-phospho-beta-D-ribosyl)anthranilate = 1-(2-carboxyphenylamino)-1-deoxy-D-ribulose 5-phosphate. It functions in the pathway amino-acid biosynthesis; L-tryptophan biosynthesis; L-tryptophan from chorismate: step 3/5. This chain is N-(5'-phosphoribosyl)anthranilate isomerase, found in Desulfatibacillum aliphaticivorans.